Here is a 72-residue protein sequence, read N- to C-terminus: MAKDDVIQMQGEVLENLPNATFRVKLENGHVVLGHISGKMRMNYIRILPGDKVTVELTPYDLSRARIVFRTK.

One can recognise an S1-like domain in the interval 1–72 (MAKDDVIQMQ…SRARIVFRTK (72 aa)).

The protein belongs to the IF-1 family. As to quaternary structure, component of the 30S ribosomal translation pre-initiation complex which assembles on the 30S ribosome in the order IF-2 and IF-3, IF-1 and N-formylmethionyl-tRNA(fMet); mRNA recruitment can occur at any time during PIC assembly.

The protein localises to the cytoplasm. Its function is as follows. One of the essential components for the initiation of protein synthesis. Stabilizes the binding of IF-2 and IF-3 on the 30S subunit to which N-formylmethionyl-tRNA(fMet) subsequently binds. Helps modulate mRNA selection, yielding the 30S pre-initiation complex (PIC). Upon addition of the 50S ribosomal subunit IF-1, IF-2 and IF-3 are released leaving the mature 70S translation initiation complex. In Cupriavidus necator (strain ATCC 17699 / DSM 428 / KCTC 22496 / NCIMB 10442 / H16 / Stanier 337) (Ralstonia eutropha), this protein is Translation initiation factor IF-1 2.